Consider the following 3259-residue polypeptide: Golgin subfamily B member 1 (3259 aa).

At Met1 the chain carries N-acetylmethionine. At Met1 to Arg3235 the chain is on the cytoplasmic side. A phosphoserine mark is found at Ser6, Ser17, Ser138, and Ser528. A coiled-coil region spans residues Glu48–Leu593. A disordered region spans residues Gly119–Glu142. The span at Gln131–Glu142 shows a compositional bias: basic and acidic residues. Residues Leu624–Ile652 are disordered. A compositionally biased stretch (basic and acidic residues) spans Val635–Glu650. A Phosphoserine modification is found at Ser653. Coiled coils occupy residues Asp677–Pro1028, Leu1062–Asp1245, and Gly1301–His1779. The tract at residues Ala944 to Tyr963 is disordered. Positions Ser1747–Ile1763 are enriched in basic and acidic residues. The interval Ser1747–Phe1829 is disordered. 2 stretches are compositionally biased toward polar residues: residues Gln1782–Pro1794 and Ser1802–Ser1820. Residues Asp1828–Glu3185 are a coiled coil. Phosphoserine occurs at positions 2216, 2735, 2872, and 2884. The disordered stretch occupies residues Arg2856 to Val2876. Residues Ser2865 to Glu2875 show a composition bias toward polar residues. Residues Thr2998–Gln3021 are disordered. Ser3037 is subject to Phosphoserine. Residues Ile3107 to Gln3140 form a disordered region. Over residues Asn3118–Glu3131 the composition is skewed to basic and acidic residues. The chain crosses the membrane as a helical span at residues Val3236–Thr3256. Residues Gly3257 to Leu3259 are Lumenal-facing.

In terms of assembly, homodimer; disulfide-linked. Interacts with PLK3.

It localises to the golgi apparatus membrane. In terms of biological role, may participate in forming intercisternal cross-bridges of the Golgi complex. The polypeptide is Golgin subfamily B member 1 (GOLGB1) (Homo sapiens (Human)).